The chain runs to 155 residues: Nucleosome assembly protein 1-like 5 (155 aa).

Residues 1 to 16 (MADPEKQGPAESRAED) show a composition bias toward basic and acidic residues. Positions 1-60 (MADPEKQGPAESRAEDEVMEGAQGGEDAATGDSATAPAAEEPQAPAENAPKPKNDFIESL) are disordered. Residues 27-49 (DAATGDSATAPAAEEPQAPAENA) are compositionally biased toward low complexity. Positions 68-94 (VLALKKLQKRCDKIEAKFDKEFQALEK) form a coiled coil. The disordered stretch occupies residues 119-155 (WTLEGEDDEDDEEEEDEEEEEEEAAAGATGGPDSAEK). The span at 122 to 142 (EGEDDEDDEEEEDEEEEEEEA) shows a compositional bias: acidic residues.

The protein belongs to the nucleosome assembly protein (NAP) family.

The protein localises to the nucleus. The polypeptide is Nucleosome assembly protein 1-like 5 (Nap1l5) (Rattus norvegicus (Rat)).